Reading from the N-terminus, the 419-residue chain is UDP-N-acetylglucosamine 1-carboxyvinyltransferase 2 (419 aa).

Phosphoenolpyruvate is bound at residue 24–25 (KN). R94 lines the UDP-N-acetyl-alpha-D-glucosamine pocket. C118 acts as the Proton donor in catalysis. The residue at position 118 (C118) is a 2-(S-cysteinyl)pyruvic acid O-phosphothioketal. UDP-N-acetyl-alpha-D-glucosamine is bound by residues 123-127 (RPIDQ), D307, and I329.

It belongs to the EPSP synthase family. MurA subfamily.

The protein localises to the cytoplasm. It carries out the reaction phosphoenolpyruvate + UDP-N-acetyl-alpha-D-glucosamine = UDP-N-acetyl-3-O-(1-carboxyvinyl)-alpha-D-glucosamine + phosphate. The protein operates within cell wall biogenesis; peptidoglycan biosynthesis. Cell wall formation. Adds enolpyruvyl to UDP-N-acetylglucosamine. This chain is UDP-N-acetylglucosamine 1-carboxyvinyltransferase 2, found in Staphylococcus epidermidis (strain ATCC 35984 / DSM 28319 / BCRC 17069 / CCUG 31568 / BM 3577 / RP62A).